Consider the following 124-residue polypeptide: Urease subunit beta (124 aa).

Belongs to the urease beta subunit family. Heterotrimer of UreA (gamma), UreB (beta) and UreC (alpha) subunits. Three heterotrimers associate to form the active enzyme.

The protein resides in the cytoplasm. The enzyme catalyses urea + 2 H2O + H(+) = hydrogencarbonate + 2 NH4(+). The protein operates within nitrogen metabolism; urea degradation; CO(2) and NH(3) from urea (urease route): step 1/1. In Ureaplasma urealyticum serovar 10 (strain ATCC 33699 / Western), this protein is Urease subunit beta.